We begin with the raw amino-acid sequence, 337 residues long: Transcription initiation factor IIB (337 aa).

Residues 37–68 (EKAVCPECGSRNLVHDYERAELVCGDCGLVID) form a TFIIB-type zinc finger. Zn(2+) contacts are provided by cysteine 41, cysteine 44, cysteine 60, and cysteine 63. Repeat copies occupy residues 154 to 237 (SELD…SREL) and 248 to 329 (DYVP…ELAE).

This sequence belongs to the TFIIB family.

Its function is as follows. Stabilizes TBP binding to an archaeal box-A promoter. Also responsible for recruiting RNA polymerase II to the pre-initiation complex (DNA-TBP-TFIIB). The protein is Transcription initiation factor IIB of Methanosarcina mazei (Methanosarcina frisia).